The chain runs to 197 residues: Lipoprotein LprI (197 aa).

The first 15 residues, 1–15, serve as a signal peptide directing secretion; sequence MRWIGVLVTALVLSA. A lipid anchor (N-palmitoyl cysteine) is attached at cysteine 16. The S-diacylglycerol cysteine moiety is linked to residue cysteine 16.

The protein in the C-terminal section; belongs to the MliC family. In terms of assembly, probably a homodimer. Post-translationally, glycosylated.

The protein resides in the cell membrane. It localises to the secreted. It is found in the cell wall. The protein localises to the cell surface. Its function is as follows. Strongly binds and inhibits lysozyme, may help bacteria survive in lysozyme-producing host cells such as monocyte-derived macrophages. The protein is Lipoprotein LprI (lprI) of Mycobacterium bovis (strain ATCC BAA-935 / AF2122/97).